The sequence spans 212 residues: Pyridoxine/pyridoxamine 5'-phosphate oxidase (212 aa).

Residues 8–11 and Lys-66 each bind substrate; that span reads RTNY. FMN is bound by residues 61–66, 76–77, Lys-83, and Gln-105; these read RIVLLK and FT. Positions 123, 127, and 131 each coordinate substrate. FMN is bound by residues 140–141 and Trp-185; that span reads QS. Residue 191–193 coordinates substrate; sequence RLH. Residue Arg-195 participates in FMN binding.

The protein belongs to the pyridoxamine 5'-phosphate oxidase family. Homodimer. Requires FMN as cofactor.

The enzyme catalyses pyridoxamine 5'-phosphate + O2 + H2O = pyridoxal 5'-phosphate + H2O2 + NH4(+). It carries out the reaction pyridoxine 5'-phosphate + O2 = pyridoxal 5'-phosphate + H2O2. Its pathway is cofactor metabolism; pyridoxal 5'-phosphate salvage; pyridoxal 5'-phosphate from pyridoxamine 5'-phosphate: step 1/1. The protein operates within cofactor metabolism; pyridoxal 5'-phosphate salvage; pyridoxal 5'-phosphate from pyridoxine 5'-phosphate: step 1/1. Its function is as follows. Catalyzes the oxidation of either pyridoxine 5'-phosphate (PNP) or pyridoxamine 5'-phosphate (PMP) into pyridoxal 5'-phosphate (PLP). The chain is Pyridoxine/pyridoxamine 5'-phosphate oxidase from Leptospira biflexa serovar Patoc (strain Patoc 1 / Ames).